The sequence spans 378 residues: Ribosomal RNA large subunit methyltransferase G (378 aa).

The protein belongs to the methyltransferase superfamily. RlmG family.

It localises to the cytoplasm. It carries out the reaction guanosine(1835) in 23S rRNA + S-adenosyl-L-methionine = N(2)-methylguanosine(1835) in 23S rRNA + S-adenosyl-L-homocysteine + H(+). In terms of biological role, specifically methylates the guanine in position 1835 (m2G1835) of 23S rRNA. This chain is Ribosomal RNA large subunit methyltransferase G, found in Shigella boydii serotype 18 (strain CDC 3083-94 / BS512).